A 256-amino-acid polypeptide reads, in one-letter code: PGL/p-HBAD biosynthesis glycosyltransferase Mb2981 (256 aa).

Belongs to the glycosyltransferase 2 family.

Its function is as follows. Involved in glycosylation steps downstream of mono-O-methyl-glycosyl-p-hydroxybenzoic acid derivative (p-HBAD I) and 2-O-methyl-rhamnosyl-phenolphthiocerol dimycocerosate (mycoside B) during the p-hydroxybenzoic acid derivatives (p-HBAD) and glycosylated phenolphthiocerol dimycocerosates (PGL) biosynthesis. The protein is PGL/p-HBAD biosynthesis glycosyltransferase Mb2981 of Mycobacterium bovis (strain ATCC BAA-935 / AF2122/97).